The following is a 452-amino-acid chain: Probable ECA polymerase (452 aa).

The next 11 helical transmembrane spans lie at 6–26, 37–57, 63–83, 118–138, 155–175, 181–201, 207–227, 228–248, 341–361, 378–398, and 410–430; these read FSGLLVVWLLSTLFIATLTWF, VFFSLLFLLTFFFGFPLTSVL, VGVAPPEILLQALLSAACFYG, VILMGIALVSVAIFFMHNGFL, GVALKRFFYFFIPAMLVVYFL, AWLFFLVSTVAFGLLTYMIVG, IIIAFAIFLFIGIIRGWISLW, MLAAAGVLGIVGMFWLALKRY, LVVMGGALFIPLGAIVVGLII, YKAAILHSFCFGAIFNMIVLA, and VFFLVVFGASLLVAKLLFWLF.

This sequence belongs to the WzyE family. As to quaternary structure, probably part of a complex composed of WzxE, WzyE and WzzE.

Its subcellular location is the cell inner membrane. Its pathway is bacterial outer membrane biogenesis; enterobacterial common antigen biosynthesis. Its function is as follows. Probably involved in the polymerization of enterobacterial common antigen (ECA) trisaccharide repeat units. This Salmonella typhi protein is Probable ECA polymerase.